The primary structure comprises 209 residues: PRA1 family protein B1 (209 aa).

A2 is subject to N-acetylalanine. Helical transmembrane passes span 73 to 93 (LAYFKVNYVAIVSLVLAFSLF), 95 to 115 (HPLSLLVLIGLLGGWMFLYLF), 133 to 153 (ETLLALVLSTIVVVFMTSVGS), 154 to 174 (LLTSALMIGVAIVCVHGAFVV), and 185 to 205 (PANAGLLSFLGGSATSAAAAV).

It belongs to the PRA1 family. In terms of assembly, can form homodimer. Interacts with PRA1B2, PRA1B3, PRA1B4, PRA1B5, PRA1B6 and PRA1E.

The protein localises to the endosome membrane. Its function is as follows. May be involved in both secretory and endocytic intracellular trafficking in the endosomal/prevacuolar compartments. The sequence is that of PRA1 family protein B1 (PRA1B1) from Arabidopsis thaliana (Mouse-ear cress).